Here is a 966-residue protein sequence, read N- to C-terminus: Regulator of G-protein signaling 3 (966 aa).

One can recognise a PDZ domain in the interval glutamine 18–valine 95. The disordered stretch occupies residues threonine 115–valine 135. At arginine 167 the chain carries Omega-N-methylarginine. Disordered stretches follow at residues glutamate 403–valine 618 and tyrosine 637–asparagine 704. 2 stretches are compositionally biased toward polar residues: residues proline 527–proline 548 and serine 576–glycine 594. The span at glycine 649–asparagine 675 shows a compositional bias: acidic residues. Over residues tyrosine 676–serine 686 the composition is skewed to basic and acidic residues. Phosphoserine is present on residues serine 712, serine 715, serine 747, and serine 776. The interval phenylalanine 806 to proline 830 is disordered. The span at lysine 820–proline 830 shows a compositional bias: basic and acidic residues. Positions serine 841–leucine 966 constitute an RGS domain.

In terms of assembly, binds the GNB1-GNG2 heterodimer. Binds EFNB1 and EFNB2. Phosphorylated by cyclic GMP-dependent protein kinase. Post-translationally, ISGylated. As to expression, detected in embryos from E8.5-16.5 in cortical ventricular zone, dorsal root ganglia and cerebellar primordia. Isoform 3 is detected in testis and in spermatocytes from newborn mice. Levels increase and reach a maximum after 21 days; after this they decrease again. Long isoforms are widely expressed.

The protein resides in the cytoplasm. It is found in the cell membrane. The protein localises to the nucleus. Down-regulates signaling from heterotrimeric G-proteins by increasing the GTPase activity of the alpha subunits, thereby driving them into their inactive GDP-bound form. Down-regulates G-protein-mediated release of inositol phosphates and activation of MAP kinases. This chain is Regulator of G-protein signaling 3 (Rgs3), found in Mus musculus (Mouse).